The sequence spans 193 residues: Dual-action ribosomal maturation protein DarP (193 aa).

Basic and acidic residues predominate over residues 1–10 (MRGRDEETGE). 2 disordered regions span residues 1-20 (MRGRDEETGEFRGASRSQQR) and 171-193 (QEQGLESGDSELEDGESASEDDE). Positions 178–193 (GDSELEDGESASEDDE) are enriched in acidic residues.

The protein belongs to the DarP family.

The protein localises to the cytoplasm. Its function is as follows. Member of a network of 50S ribosomal subunit biogenesis factors which assembles along the 30S-50S interface, preventing incorrect 23S rRNA structures from forming. Promotes peptidyl transferase center (PTC) maturation. The polypeptide is Dual-action ribosomal maturation protein DarP (Xanthomonas axonopodis pv. citri (strain 306)).